Consider the following 343-residue polypeptide: MGEIMKFYDREKELNYLKTYCQLEPNSILFVYGPKSSGKSTVMRRVIKELENSNIVFFYYNLRKYATPTRDEFLRVFFEKSDKKYLLNKLELNLGVCKFGIEENFDFNNLCLNDVFAKINESINAVVEEGKKPVLIIDELQKLKNIYFNGGKSLLNELFNLFVSLTKMEHLCHVICLTSDTLFIDEIYRNSTLKNASEYYLIDWLRKGTIRNILKEEGFSEEEINYALDYLSLPYEISQLINNKKLGLSVEQTIKQWINVEKDGLKYLIDTTDLDEEGLYNVLSKFKDKIKISYDKEVKKEEMKYLKFLIENEILFYDVINGIIKPTSIIEWHAIKEIINAMQ.

33-40 (GPKSSGKS) serves as a coordination point for ATP.

The protein belongs to the archaeal ATPase family.

This is an uncharacterized protein from Methanocaldococcus jannaschii (strain ATCC 43067 / DSM 2661 / JAL-1 / JCM 10045 / NBRC 100440) (Methanococcus jannaschii).